The following is a 259-amino-acid chain: UPF0246 protein Rfer_2372 (259 aa).

This sequence belongs to the UPF0246 family.

This chain is UPF0246 protein Rfer_2372, found in Albidiferax ferrireducens (strain ATCC BAA-621 / DSM 15236 / T118) (Rhodoferax ferrireducens).